The following is a 618-amino-acid chain: 1-aminocyclopropane-1-carboxylate synthase-like protein 1 (618 aa).

Residues 11–26 (QGTQTPAAQTTCAPST) show a composition bias toward low complexity. Positions 11 to 54 (QGTQTPAAQTTCAPSTMSSSSRPPLETLQAQSVSADETPGSALP) are disordered. Residues 27–45 (MSSSSRPPLETLQAQSVSA) show a composition bias toward polar residues. Substrate is bound at residue Glu-122. Lys-340 is modified (N6-(pyridoxal phosphate)lysine).

This sequence belongs to the class-I pyridoxal-phosphate-dependent aminotransferase family.

The sequence is that of 1-aminocyclopropane-1-carboxylate synthase-like protein 1 (accs) from Takifugu rubripes (Japanese pufferfish).